A 378-amino-acid polypeptide reads, in one-letter code: Uroporphyrinogen decarboxylase (378 aa).

Substrate-binding positions include 40–44 (RQAGR), aspartate 90, tyrosine 167, serine 222, and histidine 355.

Belongs to the uroporphyrinogen decarboxylase family. As to quaternary structure, homodimer.

The protein localises to the cytoplasm. It catalyses the reaction uroporphyrinogen III + 4 H(+) = coproporphyrinogen III + 4 CO2. Its pathway is porphyrin-containing compound metabolism; protoporphyrin-IX biosynthesis; coproporphyrinogen-III from 5-aminolevulinate: step 4/4. Functionally, catalyzes the decarboxylation of four acetate groups of uroporphyrinogen-III to yield coproporphyrinogen-III. The chain is Uroporphyrinogen decarboxylase from Psychrobacter arcticus (strain DSM 17307 / VKM B-2377 / 273-4).